The following is a 274-amino-acid chain: Dermonecrotic toxin SdSicTox-betaIIB1bi (274 aa).

Residue His-5 is part of the active site. 2 residues coordinate Mg(2+): Glu-25 and Asp-27. Residue His-41 is the Nucleophile of the active site. 2 cysteine pairs are disulfide-bonded: Cys-45–Cys-51 and Cys-47–Cys-190. Mg(2+) is bound at residue Asp-85.

The protein belongs to the arthropod phospholipase D family. Class II subfamily. Requires Mg(2+) as cofactor. Expressed by the venom gland.

The protein localises to the secreted. The enzyme catalyses an N-(acyl)-sphingosylphosphocholine = an N-(acyl)-sphingosyl-1,3-cyclic phosphate + choline. It carries out the reaction an N-(acyl)-sphingosylphosphoethanolamine = an N-(acyl)-sphingosyl-1,3-cyclic phosphate + ethanolamine. It catalyses the reaction a 1-acyl-sn-glycero-3-phosphocholine = a 1-acyl-sn-glycero-2,3-cyclic phosphate + choline. The catalysed reaction is a 1-acyl-sn-glycero-3-phosphoethanolamine = a 1-acyl-sn-glycero-2,3-cyclic phosphate + ethanolamine. Its function is as follows. Dermonecrotic toxins cleave the phosphodiester linkage between the phosphate and headgroup of certain phospholipids (sphingolipid and lysolipid substrates), forming an alcohol (often choline) and a cyclic phosphate. This toxin acts on sphingomyelin (SM). It may also act on ceramide phosphoethanolamine (CPE), lysophosphatidylcholine (LPC) and lysophosphatidylethanolamine (LPE), but not on lysophosphatidylserine (LPS), and lysophosphatidylglycerol (LPG). It acts by transphosphatidylation, releasing exclusively cyclic phosphate products as second products. Induces dermonecrosis, hemolysis, increased vascular permeability, edema, inflammatory response, and platelet aggregation. This Sicarius cf. damarensis (strain GJB-2008) (Six-eyed sand spider) protein is Dermonecrotic toxin SdSicTox-betaIIB1bi.